We begin with the raw amino-acid sequence, 452 residues long: MQRRIMGIETEFGVTCTFHGHRRLSPDEVARYLFRRVVSWGRSSNVFLRNGARLYLDVGSHPEYATAECDNLVQLVTHDRAGEWVLEDLLVDAEQRLADEGIGGDIYLFKNNTDSAGNSYGCHENYLIVRAGEFSRISDVLLPFLVTRQLICGAGKVLQTPKAATFCLSQRAEHIWEGVSSATTRSRPIINTRDEPHADAEKYRRLHVIVGDSNMCETTTMLKVGTAALMLEMVETGVPFRDFSLDNPIRAIREVSHDITGRRPVRLAGGRQASALDIQREYYTRAFEHLQTREPNVQFEQVVDLWGRQLDAIESQDFAKVDTEIDWVIKRKLFQRYQDRDNMELTDPKIAQLDLAYHDIKRGRGVFDLLQRKGLAARVTTDEDIADAVNHPPQTTRARLRGEFISAAQAAGRDFTVDWVHLKLNDQAQRTVLCKDPFRAVDERVKRLIASM.

Glutamate 9 is a binding site for Mg(2+). Arginine 53 provides a ligand contact to ATP. Position 55 (tyrosine 55) interacts with Mg(2+). Residue aspartate 57 is the Proton acceptor of the active site. Residue glutamate 63 participates in Mg(2+) binding. Residues threonine 66 and tryptophan 419 each coordinate ATP.

Belongs to the Pup ligase/Pup deamidase family. Pup-conjugating enzyme subfamily.

It carries out the reaction ATP + [prokaryotic ubiquitin-like protein]-L-glutamate + [protein]-L-lysine = ADP + phosphate + N(6)-([prokaryotic ubiquitin-like protein]-gamma-L-glutamyl)-[protein]-L-lysine.. It functions in the pathway protein degradation; proteasomal Pup-dependent pathway. It participates in protein modification; protein pupylation. In terms of biological role, catalyzes the covalent attachment of the prokaryotic ubiquitin-like protein modifier Pup to the proteasomal substrate proteins, thereby targeting them for proteasomal degradation. This tagging system is termed pupylation. The ligation reaction involves the side-chain carboxylate of the C-terminal glutamate of Pup and the side-chain amino group of a substrate lysine. The polypeptide is Pup--protein ligase (Mycobacterium leprae (strain Br4923)).